The following is a 331-amino-acid chain: Glutamyl-tRNA reductase (331 aa).

Substrate-binding positions include 49–52 (TCNR), Ser107, 112–114 (EDQ), and Gln118. The active-site Nucleophile is the Cys50. NADP(+) is bound at residue 184–189 (GNGEIG).

The protein belongs to the glutamyl-tRNA reductase family. In terms of assembly, homodimer.

The catalysed reaction is (S)-4-amino-5-oxopentanoate + tRNA(Glu) + NADP(+) = L-glutamyl-tRNA(Glu) + NADPH + H(+). It participates in porphyrin-containing compound metabolism; protoporphyrin-IX biosynthesis; 5-aminolevulinate from L-glutamyl-tRNA(Glu): step 1/2. Functionally, catalyzes the NADPH-dependent reduction of glutamyl-tRNA(Glu) to glutamate 1-semialdehyde (GSA). The protein is Glutamyl-tRNA reductase of Acetivibrio thermocellus (strain ATCC 27405 / DSM 1237 / JCM 9322 / NBRC 103400 / NCIMB 10682 / NRRL B-4536 / VPI 7372) (Clostridium thermocellum).